We begin with the raw amino-acid sequence, 272 residues long: Shikimate dehydrogenase (NADP(+)) (272 aa).

Residues 14–16 and Thr-61 contribute to the shikimate site; that span reads SKS. Residue Lys-65 is the Proton acceptor of the active site. Glu-77 contacts NADP(+). Residues Asn-86 and Asp-102 each coordinate shikimate. NADP(+) is bound by residues 126-130, 149-154, and Met-213; these read GAGGA and NRTYSR. Tyr-215 lines the shikimate pocket. An NADP(+)-binding site is contributed by Gly-237.

It belongs to the shikimate dehydrogenase family. In terms of assembly, homodimer.

It carries out the reaction shikimate + NADP(+) = 3-dehydroshikimate + NADPH + H(+). Its pathway is metabolic intermediate biosynthesis; chorismate biosynthesis; chorismate from D-erythrose 4-phosphate and phosphoenolpyruvate: step 4/7. Functionally, involved in the biosynthesis of the chorismate, which leads to the biosynthesis of aromatic amino acids. Catalyzes the reversible NADPH linked reduction of 3-dehydroshikimate (DHSA) to yield shikimate (SA). The sequence is that of Shikimate dehydrogenase (NADP(+)) from Enterobacter sp. (strain 638).